A 202-amino-acid polypeptide reads, in one-letter code: Large ribosomal subunit protein bL25 (202 aa).

Belongs to the bacterial ribosomal protein bL25 family. CTC subfamily. As to quaternary structure, part of the 50S ribosomal subunit; part of the 5S rRNA/L5/L18/L25 subcomplex. Contacts the 5S rRNA. Binds to the 5S rRNA independently of L5 and L18.

This is one of the proteins that binds to the 5S RNA in the ribosome where it forms part of the central protuberance. This Corynebacterium efficiens (strain DSM 44549 / YS-314 / AJ 12310 / JCM 11189 / NBRC 100395) protein is Large ribosomal subunit protein bL25.